Consider the following 257-residue polypeptide: Deoxyribose-phosphate aldolase (257 aa).

Residue Asp-102 is the Proton donor/acceptor of the active site. Lys-166 functions as the Schiff-base intermediate with acetaldehyde in the catalytic mechanism. Lys-198 functions as the Proton donor/acceptor in the catalytic mechanism.

This sequence belongs to the DeoC/FbaB aldolase family. DeoC type 2 subfamily.

The protein localises to the cytoplasm. The catalysed reaction is 2-deoxy-D-ribose 5-phosphate = D-glyceraldehyde 3-phosphate + acetaldehyde. The protein operates within carbohydrate degradation; 2-deoxy-D-ribose 1-phosphate degradation; D-glyceraldehyde 3-phosphate and acetaldehyde from 2-deoxy-alpha-D-ribose 1-phosphate: step 2/2. In terms of biological role, catalyzes a reversible aldol reaction between acetaldehyde and D-glyceraldehyde 3-phosphate to generate 2-deoxy-D-ribose 5-phosphate. This is Deoxyribose-phosphate aldolase from Aeromonas hydrophila subsp. hydrophila (strain ATCC 7966 / DSM 30187 / BCRC 13018 / CCUG 14551 / JCM 1027 / KCTC 2358 / NCIMB 9240 / NCTC 8049).